The chain runs to 957 residues: MTQTLSQLENSGAFIERHIGPDAAQQQEMLNAVGAQSLNALTGQIVPKDIQLATPPQVGAPATEYAALAELKAIASRNKRFTSYIGMGYTAVQLPPVILRNMLENPGWYTAYTPYQPEVSQGRLEALLNFQQVTLDLTGLDMASASLLDEATAAAEAMAMAKRVSKLKNANRFFVASDVHPQTLDVVRTRAETFGFEVIVDDAQKVLDHQDVFGVLLQQVGTTGEIHDYTALISELKSRKIVVSVAADIMALVLLTAPGKQGADIVFGSAQRFGVPMGYGGPHAAFFAAKDEYKRSMPGRIIGVSKDAAGNTALRMAMQTREQHIRREKANSNICTSQVLLANIASLYAVYHGPVGLKRIANRIHRLTDILAAGLQQKGLKLRHAHYFDTLCVEVADKAGVLARAEAAEINLRSDILNAVGITLDETTTRENVMQLFSVLLGDNHGLEIDTLDKDVAHDSRSIQPAMLRDDEILTHPVFNRYHSETEMMRYMHSLERKDLALNQAMIPLGSCTMKLNAAAEMIPITWQEFAELHPFCPPEQAEGYQQMIAQLADWLVKLTGYDAVCMQPNSGAQGEYAGLLAIRHYHESRNEGHRDICLIPASAHGTNPASAHMAGMQVVVVACDKNGNIDLTDLRAKAEQAGDNLSCIMVTYPSTHGVYEETIREVCEVVHQFGGQVYLDGANMNAQVGITSPGFIGADVSHLNLHKTFCIPHGGGGPGMGPIGVKAHLAPFVPGHSVVQIEGMLTRQGAVSAAPFGSASILPISWMYIRMMGAEGLKKASQVAILNANYIASRLQDAFPVLYTGRDGRVAHECILDIRPLKEETGISELDIAKRLIDYGFHAPTMSFPVAGTLMVEPTESESKVELDRFIDAMLAIRAEIDQVKAGVWPLEDNPLVNAPHIQNELVAEWAHPYSREVAVFPAGVADKYWPTVKRLDDVYGDRNLFCSCVPISEYQ.

Lysine 708 is subject to N6-(pyridoxal phosphate)lysine.

The protein belongs to the GcvP family. As to quaternary structure, the glycine cleavage system is composed of four proteins: P, T, L and H. Pyridoxal 5'-phosphate serves as cofactor.

The catalysed reaction is N(6)-[(R)-lipoyl]-L-lysyl-[glycine-cleavage complex H protein] + glycine + H(+) = N(6)-[(R)-S(8)-aminomethyldihydrolipoyl]-L-lysyl-[glycine-cleavage complex H protein] + CO2. Functionally, the glycine cleavage system catalyzes the degradation of glycine. The P protein binds the alpha-amino group of glycine through its pyridoxal phosphate cofactor; CO(2) is released and the remaining methylamine moiety is then transferred to the lipoamide cofactor of the H protein. The sequence is that of Glycine dehydrogenase (decarboxylating) from Escherichia coli O8 (strain IAI1).